The following is a 412-amino-acid chain: Putative competence-damage inducible protein (412 aa).

This sequence belongs to the CinA family.

The polypeptide is Putative competence-damage inducible protein (Bacillus thuringiensis (strain Al Hakam)).